The chain runs to 244 residues: Ribonuclease 3 2 (244 aa).

The RNase III domain occupies 11-136 (LKALLRRLGL…LLGALYLSVG (126 aa)). Residue glutamate 50 coordinates Mg(2+). Residue aspartate 54 is part of the active site. Mg(2+)-binding residues include aspartate 122 and glutamate 125. The active site involves glutamate 125. Positions 164–234 (NYKEALQAWT…AQQAYQDFIA (71 aa)) constitute a DRBM domain.

Belongs to the ribonuclease III family. As to quaternary structure, homodimer. It depends on Mg(2+) as a cofactor.

The protein localises to the cytoplasm. The catalysed reaction is Endonucleolytic cleavage to 5'-phosphomonoester.. Digests double-stranded RNA. Involved in the processing of primary rRNA transcript to yield the immediate precursors to the large and small rRNAs (23S and 16S). Processes some mRNAs, and tRNAs when they are encoded in the rRNA operon. Processes pre-crRNA and tracrRNA of type II CRISPR loci if present in the organism. The chain is Ribonuclease 3 2 from Synechocystis sp. (strain ATCC 27184 / PCC 6803 / Kazusa).